The chain runs to 445 residues: Ribosomal protein uS12 methylthiotransferase RimO (445 aa).

An MTTase N-terminal domain is found at 10 to 120 (PKVGFVSLGC…VVNAVHEVVP (111 aa)). 6 residues coordinate [4Fe-4S] cluster: Cys19, Cys55, Cys84, Cys153, Cys157, and Cys160. Residues 139–378 (LTPRHYAYLK…AHQQEISSAR (240 aa)) form the Radical SAM core domain. The region spanning 380–445 (QQRIGKEIEV…DEYDLWAETL (66 aa)) is the TRAM domain.

Belongs to the methylthiotransferase family. RimO subfamily. [4Fe-4S] cluster is required as a cofactor.

It is found in the cytoplasm. The enzyme catalyses L-aspartate(89)-[ribosomal protein uS12]-hydrogen + (sulfur carrier)-SH + AH2 + 2 S-adenosyl-L-methionine = 3-methylsulfanyl-L-aspartate(89)-[ribosomal protein uS12]-hydrogen + (sulfur carrier)-H + 5'-deoxyadenosine + L-methionine + A + S-adenosyl-L-homocysteine + 2 H(+). Catalyzes the methylthiolation of an aspartic acid residue of ribosomal protein uS12. In Pseudomonas fluorescens (strain ATCC BAA-477 / NRRL B-23932 / Pf-5), this protein is Ribosomal protein uS12 methylthiotransferase RimO.